A 406-amino-acid polypeptide reads, in one-letter code: MNAPSRPNDYAAYPDLKGRFGDYGGQYVPETLMPLVHELTAAYEAAKADPAFQAELAGYLTHYVGRPSPLYFAERLTRHYGGAKIYLKREELNHTGSHKINNCMGQILLAQRMGKTRIIAETGAGQHGVATATVCARFGLPCVVYMGAVDVERQKPNVFRMNLLGAEVRPVTSGSATLKDAMNEALRDWVTNVHDTYYLIGSAAGMHPYPMMVRDFQAVIGRETREQILELEGRLPDALVACVGGGSNAIGLFHPFLNDSSVKIFGVEAAGEGVETGRHAAAINGGRPGVLHGNMTYLLQDRVGQIEEAHSISAGLDYPGIGPEHAWLHDVGRATYLTATDTEALEAFRLLSELEGILPAIESSHALARLPEITREVGKDGIVVLNLSGRGDKDVNTVASYLGRQI.

At Lys-99 the chain carries N6-(pyridoxal phosphate)lysine.

This sequence belongs to the TrpB family. Tetramer of two alpha and two beta chains. Requires pyridoxal 5'-phosphate as cofactor.

The catalysed reaction is (1S,2R)-1-C-(indol-3-yl)glycerol 3-phosphate + L-serine = D-glyceraldehyde 3-phosphate + L-tryptophan + H2O. It participates in amino-acid biosynthesis; L-tryptophan biosynthesis; L-tryptophan from chorismate: step 5/5. The beta subunit is responsible for the synthesis of L-tryptophan from indole and L-serine. The sequence is that of Tryptophan synthase beta chain from Phenylobacterium zucineum (strain HLK1).